The following is a 245-amino-acid chain: tRNA (guanine-N(1)-)-methyltransferase (245 aa).

S-adenosyl-L-methionine is bound by residues Gly111 and 131 to 136; that span reads IGDYVL.

The protein belongs to the RNA methyltransferase TrmD family. Homodimer.

It localises to the cytoplasm. It catalyses the reaction guanosine(37) in tRNA + S-adenosyl-L-methionine = N(1)-methylguanosine(37) in tRNA + S-adenosyl-L-homocysteine + H(+). Its function is as follows. Specifically methylates guanosine-37 in various tRNAs. The sequence is that of tRNA (guanine-N(1)-)-methyltransferase from Caldicellulosiruptor saccharolyticus (strain ATCC 43494 / DSM 8903 / Tp8T 6331).